The following is a 115-amino-acid chain: Large ribosomal subunit protein uL24 (115 aa).

It belongs to the universal ribosomal protein uL24 family. In terms of assembly, part of the 50S ribosomal subunit.

Functionally, one of two assembly initiator proteins, it binds directly to the 5'-end of the 23S rRNA, where it nucleates assembly of the 50S subunit. In terms of biological role, one of the proteins that surrounds the polypeptide exit tunnel on the outside of the subunit. The sequence is that of Large ribosomal subunit protein uL24 from Phytoplasma mali (strain AT).